Reading from the N-terminus, the 362-residue chain is 3-dehydroquinate synthase (362 aa).

Residues 73–78, 107–111, 131–132, K144, K153, and 171–174 each bind NAD(+); these read DAEAGK, GAATD, TT, and TLQT. Residues E186, H249, and H265 each contribute to the Zn(2+) site.

The protein belongs to the sugar phosphate cyclases superfamily. Dehydroquinate synthase family. NAD(+) is required as a cofactor. The cofactor is Co(2+). Zn(2+) serves as cofactor.

The protein resides in the cytoplasm. It catalyses the reaction 7-phospho-2-dehydro-3-deoxy-D-arabino-heptonate = 3-dehydroquinate + phosphate. It functions in the pathway metabolic intermediate biosynthesis; chorismate biosynthesis; chorismate from D-erythrose 4-phosphate and phosphoenolpyruvate: step 2/7. Functionally, catalyzes the conversion of 3-deoxy-D-arabino-heptulosonate 7-phosphate (DAHP) to dehydroquinate (DHQ). The chain is 3-dehydroquinate synthase from Mycobacterium bovis (strain ATCC BAA-935 / AF2122/97).